Reading from the N-terminus, the 418-residue chain is Gamma-glutamyl phosphate reductase (418 aa).

Belongs to the gamma-glutamyl phosphate reductase family.

The protein localises to the cytoplasm. The catalysed reaction is L-glutamate 5-semialdehyde + phosphate + NADP(+) = L-glutamyl 5-phosphate + NADPH + H(+). It functions in the pathway amino-acid biosynthesis; L-proline biosynthesis; L-glutamate 5-semialdehyde from L-glutamate: step 2/2. Its function is as follows. Catalyzes the NADPH-dependent reduction of L-glutamate 5-phosphate into L-glutamate 5-semialdehyde and phosphate. The product spontaneously undergoes cyclization to form 1-pyrroline-5-carboxylate. The protein is Gamma-glutamyl phosphate reductase of Agathobacter rectalis (strain ATCC 33656 / DSM 3377 / JCM 17463 / KCTC 5835 / VPI 0990) (Eubacterium rectale).